Reading from the N-terminus, the 68-residue chain is Large ribosomal subunit protein uL29 (68 aa).

Belongs to the universal ribosomal protein uL29 family.

The polypeptide is Large ribosomal subunit protein uL29 (Limosilactobacillus fermentum (strain NBRC 3956 / LMG 18251) (Lactobacillus fermentum)).